Here is a 36-residue protein sequence, read N- to C-terminus: Mu/omega-theraphotoxin-Pmu1a (36 aa).

3 cysteine pairs are disulfide-bonded: Cys2–Cys16, Cys9–Cys21, and Cys15–Cys29.

Belongs to the neurotoxin 10 (Hwtx-1) family. As to expression, expressed by the venom gland.

The protein localises to the secreted. In terms of biological role, gating-modifier toxin that targets both voltage-gated sodium and calcium channels, with described activities on human Nav1.7/SCN9A (IC(50)=5.5-7 nM), hNav1.6/SCN10A (IC(50)=9.9 nM), hNav1.4/SCN4A (IC(50)=62.9 nM), hCav3.2/CACNA1H (IC(50)=955.4 nM or 63.5% inhibition at 10 uM), hCav3.1/CACNA1G (95.1% inhibition at 10 uM), hCav3.3/CACNA1I (90.8% inhibition at 10 uM). Acts on Cav3 currents mainly by inducing a strong depolarizing shift in the current-voltage curve. This chain is Mu/omega-theraphotoxin-Pmu1a, found in Pterinochilus murinus (Mombasa golden starburst baboon spider).